A 425-amino-acid polypeptide reads, in one-letter code: Serine--tRNA ligase (425 aa).

233–235 (TAE) is a binding site for L-serine. Residue 264–266 (RRE) participates in ATP binding. An L-serine-binding site is contributed by Glu-287. Residue 351–354 (EISS) coordinates ATP. Ser-385 is a binding site for L-serine.

This sequence belongs to the class-II aminoacyl-tRNA synthetase family. Type-1 seryl-tRNA synthetase subfamily. In terms of assembly, homodimer. The tRNA molecule binds across the dimer.

The protein localises to the cytoplasm. It carries out the reaction tRNA(Ser) + L-serine + ATP = L-seryl-tRNA(Ser) + AMP + diphosphate + H(+). The catalysed reaction is tRNA(Sec) + L-serine + ATP = L-seryl-tRNA(Sec) + AMP + diphosphate + H(+). It functions in the pathway aminoacyl-tRNA biosynthesis; selenocysteinyl-tRNA(Sec) biosynthesis; L-seryl-tRNA(Sec) from L-serine and tRNA(Sec): step 1/1. In terms of biological role, catalyzes the attachment of serine to tRNA(Ser). Is also able to aminoacylate tRNA(Sec) with serine, to form the misacylated tRNA L-seryl-tRNA(Sec), which will be further converted into selenocysteinyl-tRNA(Sec). This Synechococcus sp. (strain CC9605) protein is Serine--tRNA ligase.